Consider the following 140-residue polypeptide: Cysteine protease inhibitor 6 (140 aa).

Residues Cys103 and Cys109 are joined by a disulfide bond.

This sequence belongs to the protease inhibitor I3 (leguminous Kunitz-type inhibitor) family.

Its subcellular location is the vacuole. Inhibitor of cysteine proteases. May protect the plant by inhibiting proteases of invading organisms. This is Cysteine protease inhibitor 6 from Solanum tuberosum (Potato).